The following is a 131-amino-acid chain: MSWQTYVDEHLMCEIDGQHLTAAAIIGHDGSIWAQSESFPQVKSEQITGVMNDFAEPGSLAPTGLFLGDNKYMVIQGEPGAVIRGKKGSGGVTIKKTNMALIVGIYDEPMTPGQCNMVVERLGDYLYDQGF.

It belongs to the profilin family. As to quaternary structure, occurs in many kinds of cells as a complex with monomeric actin in a 1:1 ratio.

It localises to the cytoplasm. It is found in the cytoskeleton. In terms of biological role, binds to actin and affects the structure of the cytoskeleton. At high concentrations, profilin prevents the polymerization of actin, whereas it enhances it at low concentrations. By binding to PIP2, it inhibits the formation of IP3 and DG. The polypeptide is Profilin-2 (Lilium longiflorum (Trumpet lily)).